The primary structure comprises 107 residues: Putative double-stranded DNA mimic protein HS_0995 (107 aa).

This sequence belongs to the putative dsDNA mimic protein family.

Its function is as follows. May act as a double-stranded DNA (dsDNA) mimic. Probably regulates the activity of a dsDNA-binding protein. This chain is Putative double-stranded DNA mimic protein HS_0995, found in Histophilus somni (strain 129Pt) (Haemophilus somnus).